The primary structure comprises 1041 residues: MKKKNISPSLVLHPLLLLLLPFFAFNSLALKFSPQLLSLLSLKTSLSGPPSAFQDWKVPVNGQNDAVWCSWSGVVCDNVTAQVISLDLSHRNLSGRIPIQIRYLSSLLYLNLSGNSLEGSFPTSIFDLTKLTTLDISRNSFDSSFPPGISKLKFLKVFNAFSNNFEGLLPSDVSRLRFLEELNFGGSYFEGEIPAAYGGLQRLKFIHLAGNVLGGKLPPRLGLLTELQHMEIGYNHFNGNIPSEFALLSNLKYFDVSNCSLSGSLPQELGNLSNLETLFLFQNGFTGEIPESYSNLKSLKLLDFSSNQLSGSIPSGFSTLKNLTWLSLISNNLSGEVPEGIGELPELTTLFLWNNNFTGVLPHKLGSNGKLETMDVSNNSFTGTIPSSLCHGNKLYKLILFSNMFEGELPKSLTRCESLWRFRSQNNRLNGTIPIGFGSLRNLTFVDLSNNRFTDQIPADFATAPVLQYLNLSTNFFHRKLPENIWKAPNLQIFSASFSNLIGEIPNYVGCKSFYRIELQGNSLNGTIPWDIGHCEKLLCLNLSQNHLNGIIPWEISTLPSIADVDLSHNLLTGTIPSDFGSSKTITTFNVSYNQLIGPIPSGSFAHLNPSFFSSNEGLCGDLVGKPCNSDRFNAGNADIDGHHKEERPKKTAGAIVWILAAAIGVGFFVLVAATRCFQKSYGNRVDGGGRNGGDIGPWKLTAFQRLNFTADDVVECLSKTDNILGMGSTGTVYKAEMPNGEIIAVKKLWGKNKENGKIRRRKSGVLAEVDVLGNVRHRNIVRLLGCCTNRDCTMLLYEYMPNGSLDDLLHGGDKTMTAAAEWTALYQIAIGVAQGICYLHHDCDPVIVHRDLKPSNILLDADFEARVADFGVAKLIQTDESMSVVAGSYGYIAPEYAYTLQVDKKSDIYSYGVILLEIITGKRSVEPEFGEGNSIVDWVRSKLKTKEDVEEVLDKSMGRSCSLIREEMKQMLRIALLCTSRSPTDRPPMRDVLLILQEAKPKRKTVGDNVIVVGDVNDVNFEDVCSVDVGHDVKCQRIGV.

Residues methionine 1–alanine 29 form the signal peptide. Over leucine 30–threonine 652 the chain is Extracellular. A disulfide bond links cysteine 69 and cysteine 76. Asparagine 78, asparagine 92, and asparagine 111 each carry an N-linked (GlcNAc...) asparagine glycan. LRR repeat units lie at residues threonine 80–leucine 104, serine 105–leucine 128, lysine 130–leucine 152, phenylalanine 154–leucine 176, arginine 177–glycine 199, leucine 200–leucine 224, threonine 225–leucine 248, asparagine 250–leucine 272, serine 273–leucine 296, lysine 297–threonine 319, lysine 321–leucine 344, proline 345–asparagine 368, glycine 369–glycine 392, lysine 394–cysteine 416, serine 418–serine 439, leucine 440–alanine 464, valine 466–alanine 488, cysteine 511–cysteine 535, glutamate 536–threonine 558, leucine 559–serine 583, and threonine 585–histidine 607. A CLE peptide binding region spans residues glycine 186–tyrosine 188. The segment at glycine 233–asparagine 235 is CLE peptide binding. Asparagine 258 and asparagine 271 each carry an N-linked (GlcNAc...) asparagine glycan. The segment at aspartate 303–asparagine 307 is CLE peptide binding. Asparagine 322, asparagine 332, and asparagine 356 each carry an N-linked (GlcNAc...) asparagine glycan. The tract at residues aspartate 375–serine 377 is CLE peptide binding. Asparagine 378 is a glycosylation site (N-linked (GlcNAc...) asparagine). A disulfide bond links cysteine 390 and cysteine 416. The tract at residues arginine 421–arginine 423 is CLE peptide binding. N-linked (GlcNAc...) asparagine glycosylation is found at asparagine 430, asparagine 442, asparagine 471, asparagine 525, and asparagine 542. Cysteine 511 and cysteine 535 form a disulfide bridge. N-linked (GlcNAc...) asparagine glycosylation occurs at asparagine 590. Residues cysteine 620 and cysteine 628 are joined by a disulfide bond. The helical transmembrane segment at alanine 653–alanine 673 threads the bilayer. At alanine 674 to valine 1041 the chain is on the cytoplasmic side. Threonine 710 carries the post-translational modification Phosphothreonine. Positions serine 719–lysine 1001 constitute a Protein kinase domain. ATP-binding positions include leucine 725–valine 733 and lysine 747. Residues tyrosine 798 and tyrosine 839 each carry the phosphotyrosine modification. The Proton acceptor role is filled by aspartate 852. Serine 884 carries the phosphoserine modification. Tyrosine 892 and tyrosine 899 each carry phosphotyrosine. Residue threonine 900 is modified to Phosphothreonine.

Belongs to the protein kinase superfamily. Ser/Thr protein kinase family. In terms of assembly, interacts specifically with the mature peptides CLE41p and CLE44p, especially in the presence of SERK2. Interacts with LURE1.2. Widely expressed along the vascular strands. In roots and hypocotyls, confined to procambial cells.

It localises to the cell membrane. It carries out the reaction L-seryl-[protein] + ATP = O-phospho-L-seryl-[protein] + ADP + H(+). The catalysed reaction is L-threonyl-[protein] + ATP = O-phospho-L-threonyl-[protein] + ADP + H(+). Functionally, acts with CLE41p and CLE44p peptides as a ligand-receptor pair in a signal transduction pathway involved in the regulation of procambium maintenance and polarity during vascular-tissue development. Mediates repression of tracheary element differentiation and the promotion of procambial cells formation and polar division adjacent to phloem cells in the veins. The sequence is that of Leucine-rich repeat receptor-like protein kinase TDR from Arabidopsis thaliana (Mouse-ear cress).